The primary structure comprises 358 residues: Nicotinate-nucleotide--dimethylbenzimidazole phosphoribosyltransferase (358 aa).

The Proton acceptor role is filled by E313.

It belongs to the CobT family.

It carries out the reaction 5,6-dimethylbenzimidazole + nicotinate beta-D-ribonucleotide = alpha-ribazole 5'-phosphate + nicotinate + H(+). The protein operates within nucleoside biosynthesis; alpha-ribazole biosynthesis; alpha-ribazole from 5,6-dimethylbenzimidazole: step 1/2. In terms of biological role, catalyzes the synthesis of alpha-ribazole-5'-phosphate from nicotinate mononucleotide (NAMN) and 5,6-dimethylbenzimidazole (DMB). The polypeptide is Nicotinate-nucleotide--dimethylbenzimidazole phosphoribosyltransferase (Corynebacterium glutamicum (strain R)).